The following is a 442-amino-acid chain: UDP-N-acetylmuramate--L-alanine ligase (442 aa).

109–115 (GAHGKTS) provides a ligand contact to ATP.

This sequence belongs to the MurCDEF family.

The protein localises to the cytoplasm. The enzyme catalyses UDP-N-acetyl-alpha-D-muramate + L-alanine + ATP = UDP-N-acetyl-alpha-D-muramoyl-L-alanine + ADP + phosphate + H(+). It participates in cell wall biogenesis; peptidoglycan biosynthesis. Functionally, cell wall formation. The polypeptide is UDP-N-acetylmuramate--L-alanine ligase (Streptococcus pyogenes serotype M3 (strain SSI-1)).